A 408-amino-acid chain; its full sequence is Phosphopentomutase (408 aa).

Positions 10, 307, 312, 348, 349, and 360 each coordinate Mn(2+).

It belongs to the phosphopentomutase family. Requires Mn(2+) as cofactor.

It localises to the cytoplasm. The catalysed reaction is 2-deoxy-alpha-D-ribose 1-phosphate = 2-deoxy-D-ribose 5-phosphate. It carries out the reaction alpha-D-ribose 1-phosphate = D-ribose 5-phosphate. It functions in the pathway carbohydrate degradation; 2-deoxy-D-ribose 1-phosphate degradation; D-glyceraldehyde 3-phosphate and acetaldehyde from 2-deoxy-alpha-D-ribose 1-phosphate: step 1/2. Functionally, isomerase that catalyzes the conversion of deoxy-ribose 1-phosphate (dRib-1-P) and ribose 1-phosphate (Rib-1-P) to deoxy-ribose 5-phosphate (dRib-5-P) and ribose 5-phosphate (Rib-5-P), respectively. The chain is Phosphopentomutase from Proteus mirabilis (strain HI4320).